A 449-amino-acid polypeptide reads, in one-letter code: Glucose-6-phosphate isomerase (449 aa).

Glutamate 291 serves as the catalytic Proton donor. Active-site residues include histidine 312 and lysine 426.

Belongs to the GPI family.

The protein resides in the cytoplasm. It carries out the reaction alpha-D-glucose 6-phosphate = beta-D-fructose 6-phosphate. The protein operates within carbohydrate biosynthesis; gluconeogenesis. It participates in carbohydrate degradation; glycolysis; D-glyceraldehyde 3-phosphate and glycerone phosphate from D-glucose: step 2/4. Catalyzes the reversible isomerization of glucose-6-phosphate to fructose-6-phosphate. This Pediococcus pentosaceus (strain ATCC 25745 / CCUG 21536 / LMG 10740 / 183-1w) protein is Glucose-6-phosphate isomerase.